The primary structure comprises 397 residues: MDQGTVDSPVTLVIKAPNQKYDDQTINCFLNWTVEKLKKHISNVYPSKPLSKDQRLVYSGRLLQDHLQLRDVLRKQDEYHMVHLVCASRSPPSSPTSDSHFSTTDSSSSTSDSAGPSLSSTPSQEAQANSDGLRHRGNPAATHGLNPAPTGVMQRPEGMPLPMQGGPAAGFPTHPMYMPMQMFWWQQMYARHYYVQYQAAIAASRASSVAPSPSLSAGPATQPVQPNEPAAPMGPNPAPEDRPANPNIQMNAQGGAMLNDDELNRDWLDWMYTVSRAAILLSIVYFYSSFGRFVMVIGAMLLVYLHQAGWFPFRAELQNPRAEEGAQDEADQNQDMQEMERMMDEGIEDDEGDSGEEGPDDPMNPGPHQPGFLSATWSFISTFFTSLIPEGPPQAAN.

Residues 10–89 (VTLVIKAPNQ…HMVHLVCASR (80 aa)) enclose the Ubiquitin-like domain. Disordered stretches follow at residues 87–166 (ASRS…MQGG) and 210–246 (APSP…PANP). 2 stretches are compositionally biased toward low complexity: residues 88–123 (SRSP…STPS) and 210–220 (APSPSLSAGPA). The helical transmembrane segment at 293 to 313 (FVMVIGAMLLVYLHQAGWFPF) threads the bilayer. Residues 344–373 (DEGIEDDEGDSGEEGPDDPMNPGPHQPGFL) are disordered. Positions 345-360 (EGIEDDEGDSGEEGPD) are enriched in acidic residues.

The protein localises to the membrane. Its function is as follows. Could be involved in the unfolded protein response (UPR) pathway. The protein is Homocysteine-responsive endoplasmic reticulum-resident ubiquitin-like domain member 2 protein (herpud2) of Danio rerio (Zebrafish).